Reading from the N-terminus, the 558-residue chain is MPAKLNSPSRYHGIYNAPHRAFLRSVGLTDEEIGKPLVAIATAWSEAGPCNFHTLALARVAKEGTKEAGLSPLAFPTMVVNDNIGMGSEGMRYSLVSRDLIADMVEAQFNAHAFDGLVGIGGCDKTTPGILMAMARLNVPSIYIYGGSAEPGYFMGKRLTIEDVHEAIGAYLAKRITENELYEIEKRAHPTLGTCSGLFTANTMGSMSEALGMALPGSASPTATSSRRVMYVKETGKALGSLIENGIKSREILTFEAFENAITTLMAMGGSTNAVLHLLAIAYEAGVKLTLDDFNRISKRTPYIASMKPGGDYVMADLDEVGGVPVVLKKLLDAGLLHGDVLTVTGKTMKQNLEQYKYPNVPHSHIVRDVKNPIKPRGGIVILKGSLAPEGAVIKVAATNVVKFEGKAKVYNSEDDAFKGVQSGEVSEGEVVIIRYEGPKGAPGMPEMLRVTAAIMGAGLNNVALVTDGRFSGATRGPMVGHVAPEAMVGGPIAIVEDGDTIVIDVESERLDLKLSEEEIKNRLKRWSPPSPRYKSGLLAKYASLVSQASMGAVTRPA.

Cys50 contributes to the [2Fe-2S] cluster binding site. Asp82 contributes to the Mg(2+) binding site. Cys123 provides a ligand contact to [2Fe-2S] cluster. Asp124 and Lys125 together coordinate Mg(2+). Position 125 is an N6-carboxylysine (Lys125). Cys195 contributes to the [2Fe-2S] cluster binding site. Residue Glu447 participates in Mg(2+) binding. Catalysis depends on Ser472, which acts as the Proton acceptor.

This sequence belongs to the IlvD/Edd family. In terms of assembly, homodimer. The cofactor is [2Fe-2S] cluster. Requires Mg(2+) as cofactor.

It catalyses the reaction (2R)-2,3-dihydroxy-3-methylbutanoate = 3-methyl-2-oxobutanoate + H2O. The catalysed reaction is (2R,3R)-2,3-dihydroxy-3-methylpentanoate = (S)-3-methyl-2-oxopentanoate + H2O. It functions in the pathway amino-acid biosynthesis; L-isoleucine biosynthesis; L-isoleucine from 2-oxobutanoate: step 3/4. The protein operates within amino-acid biosynthesis; L-valine biosynthesis; L-valine from pyruvate: step 3/4. Functionally, functions in the biosynthesis of branched-chain amino acids. Catalyzes the dehydration of (2R,3R)-2,3-dihydroxy-3-methylpentanoate (2,3-dihydroxy-3-methylvalerate) into 2-oxo-3-methylpentanoate (2-oxo-3-methylvalerate) and of (2R)-2,3-dihydroxy-3-methylbutanoate (2,3-dihydroxyisovalerate) into 2-oxo-3-methylbutanoate (2-oxoisovalerate), the penultimate precursor to L-isoleucine and L-valine, respectively. The protein is Dihydroxy-acid dehydratase of Saccharolobus islandicus (strain Y.N.15.51 / Yellowstone #2) (Sulfolobus islandicus).